A 37-amino-acid chain; its full sequence is Large ribosomal subunit protein bL36c (37 aa).

It belongs to the bacterial ribosomal protein bL36 family.

It is found in the plastid. Its subcellular location is the chloroplast. This is Large ribosomal subunit protein bL36c from Huperzia lucidula (Shining clubmoss).